The sequence spans 45 residues: MTKRTLGGTSRKRKRVSGFRVRMRSHTGRRVIRTRRKRGRSRLAV.

The disordered stretch occupies residues 1–45; it reads MTKRTLGGTSRKRKRVSGFRVRMRSHTGRRVIRTRRKRGRSRLAV. Over residues 10–45 the composition is skewed to basic residues; sequence SRKRKRVSGFRVRMRSHTGRRVIRTRRKRGRSRLAV.

Belongs to the bacterial ribosomal protein bL34 family.

This is Large ribosomal subunit protein bL34 from Parasynechococcus marenigrum (strain WH8102).